Reading from the N-terminus, the 312-residue chain is Light-independent protochlorophyllide reductase iron-sulfur ATP-binding protein (312 aa).

ATP-binding positions include 55–60 (GIGKST) and lysine 84. Residue serine 59 participates in Mg(2+) binding. The [4Fe-4S] cluster site is built by cysteine 140 and cysteine 174. Residues 225–226 (NR) and 249–251 (PDL) each bind ATP.

This sequence belongs to the NifH/BchL/ChlL family. As to quaternary structure, homodimer. Protochlorophyllide reductase is composed of three subunits; BchL, BchN and BchB. It depends on [4Fe-4S] cluster as a cofactor.

The catalysed reaction is chlorophyllide a + oxidized 2[4Fe-4S]-[ferredoxin] + 2 ADP + 2 phosphate = protochlorophyllide a + reduced 2[4Fe-4S]-[ferredoxin] + 2 ATP + 2 H2O. The protein operates within porphyrin-containing compound metabolism; bacteriochlorophyll biosynthesis (light-independent). Component of the dark-operative protochlorophyllide reductase (DPOR) that uses Mg-ATP and reduced ferredoxin to reduce ring D of protochlorophyllide (Pchlide) to form chlorophyllide a (Chlide). This reaction is light-independent. The L component serves as a unique electron donor to the NB-component of the complex, and binds Mg-ATP. The sequence is that of Light-independent protochlorophyllide reductase iron-sulfur ATP-binding protein from Rhodopseudomonas palustris (strain BisB18).